The primary structure comprises 387 residues: 3-ketoacyl-CoA thiolase (387 aa).

The active-site Acyl-thioester intermediate is C91. Catalysis depends on proton acceptor residues H343 and C373.

The protein belongs to the thiolase-like superfamily. Thiolase family. Heterotetramer of two alpha chains (FadB) and two beta chains (FadA).

It is found in the cytoplasm. It carries out the reaction an acyl-CoA + acetyl-CoA = a 3-oxoacyl-CoA + CoA. The protein operates within lipid metabolism; fatty acid beta-oxidation. In terms of biological role, catalyzes the final step of fatty acid oxidation in which acetyl-CoA is released and the CoA ester of a fatty acid two carbons shorter is formed. The polypeptide is 3-ketoacyl-CoA thiolase (Shewanella sp. (strain ANA-3)).